The following is a 320-amino-acid chain: 3'-5' exoribonuclease YhaM (320 aa).

The segment at residues Phe18–Thr90 is a DNA-binding region (OB). An HD domain is found at His163–Lys279.

Belongs to the YhaM family.

Its function is as follows. Shows a 3'-5' exoribonuclease activity. The protein is 3'-5' exoribonuclease YhaM of Halalkalibacterium halodurans (strain ATCC BAA-125 / DSM 18197 / FERM 7344 / JCM 9153 / C-125) (Bacillus halodurans).